A 490-amino-acid polypeptide reads, in one-letter code: Cytochrome P450 71D11 (490 aa).

Cys-427 lines the heme pocket.

The protein belongs to the cytochrome P450 family. Heme is required as a cofactor.

This chain is Cytochrome P450 71D11 (CYP71D11), found in Lotus japonicus (Lotus corniculatus var. japonicus).